The sequence spans 305 residues: Protoheme IX farnesyltransferase (305 aa).

9 helical membrane passes run 31–51 (VISL…YSVH), 52–72 (PFIA…AGAI), 96–118 (VIES…FFMA), 123–145 (LLAS…IWLK), 151–171 (NIVI…AAVS), 179–199 (IILF…LALF), 225–245 (ILIY…IGMN), 247–267 (FIYL…AGSL), and 281–301 (FAYS…TNTI).

The protein belongs to the UbiA prenyltransferase family. Protoheme IX farnesyltransferase subfamily.

It is found in the cell inner membrane. The enzyme catalyses heme b + (2E,6E)-farnesyl diphosphate + H2O = Fe(II)-heme o + diphosphate. The protein operates within porphyrin-containing compound metabolism; heme O biosynthesis; heme O from protoheme: step 1/1. Functionally, converts heme B (protoheme IX) to heme O by substitution of the vinyl group on carbon 2 of heme B porphyrin ring with a hydroxyethyl farnesyl side group. In Rickettsia massiliae (strain Mtu5), this protein is Protoheme IX farnesyltransferase.